The primary structure comprises 308 residues: D-alanine--D-alanine ligase (308 aa).

The 194-residue stretch at 109–302 (KAAYAAAGLP…FGALCRWIVE (194 aa)) folds into the ATP-grasp domain. An ATP-binding site is contributed by 136–186 (MPPPYVIKPYNEGSSVGVYLVPEGAEAAPELADDLPDTLMVEAFVPGRELT). The Mg(2+) site is built by Asp-253, Glu-269, and Asn-271.

It belongs to the D-alanine--D-alanine ligase family. The cofactor is Mg(2+). Mn(2+) serves as cofactor.

Its subcellular location is the cytoplasm. The enzyme catalyses 2 D-alanine + ATP = D-alanyl-D-alanine + ADP + phosphate + H(+). It participates in cell wall biogenesis; peptidoglycan biosynthesis. Its function is as follows. Cell wall formation. The chain is D-alanine--D-alanine ligase from Dinoroseobacter shibae (strain DSM 16493 / NCIMB 14021 / DFL 12).